We begin with the raw amino-acid sequence, 283 residues long: 4-hydroxybenzoate octaprenyltransferase (283 aa).

Helical transmembrane passes span 16 to 36 (PIGTYLLAWPTIWALMIAGAG), 40 to 60 (LRIVVIFLLGTFVMRSAGCVI), 85 to 105 (ISATEAMIGFIALLAIAFGLV), 108 to 128 (LNTETVMLSFFAAGVAALYPF), 135 to 155 (LPQIVLGIAFSFGIPMAFTAL), 160 to 180 (WFIAGLLFLANILWTVAYDTE), 204 to 224 (FDRLAIGLLQLATLALLGWIL), 226 to 246 (LITVELWVWLALAAIFLLFAY), and 263 to 283 (FLHNHYIGMVFAIGLAVHYWF).

The protein belongs to the UbiA prenyltransferase family. Requires Mg(2+) as cofactor.

The protein resides in the cell inner membrane. It catalyses the reaction all-trans-octaprenyl diphosphate + 4-hydroxybenzoate = 4-hydroxy-3-(all-trans-octaprenyl)benzoate + diphosphate. It participates in cofactor biosynthesis; ubiquinone biosynthesis. Catalyzes the prenylation of para-hydroxybenzoate (PHB) with an all-trans polyprenyl group. Mediates the second step in the final reaction sequence of ubiquinone-8 (UQ-8) biosynthesis, which is the condensation of the polyisoprenoid side chain with PHB, generating the first membrane-bound Q intermediate 3-octaprenyl-4-hydroxybenzoate. The sequence is that of 4-hydroxybenzoate octaprenyltransferase from Idiomarina loihiensis (strain ATCC BAA-735 / DSM 15497 / L2-TR).